Here is a 429-residue protein sequence, read N- to C-terminus: Phosphoribosylamine--glycine ligase (429 aa).

In terms of domain architecture, ATP-grasp spans K109 to D316. L135–S196 is an ATP binding site. The Mg(2+) site is built by E286 and N288.

It belongs to the GARS family. As to quaternary structure, monomer. Mg(2+) is required as a cofactor. The cofactor is Mn(2+).

It carries out the reaction 5-phospho-beta-D-ribosylamine + glycine + ATP = N(1)-(5-phospho-beta-D-ribosyl)glycinamide + ADP + phosphate + H(+). Its pathway is purine metabolism; IMP biosynthesis via de novo pathway; N(1)-(5-phospho-D-ribosyl)glycinamide from 5-phospho-alpha-D-ribose 1-diphosphate: step 2/2. The chain is Phosphoribosylamine--glycine ligase from Salmonella typhimurium (strain LT2 / SGSC1412 / ATCC 700720).